Here is a 104-residue protein sequence, read N- to C-terminus: Small ribosomal subunit protein uS10 (104 aa).

It belongs to the universal ribosomal protein uS10 family. In terms of assembly, part of the 30S ribosomal subunit.

Involved in the binding of tRNA to the ribosomes. In Helicobacter pylori (strain J99 / ATCC 700824) (Campylobacter pylori J99), this protein is Small ribosomal subunit protein uS10.